The primary structure comprises 286 residues: ATP synthase gamma chain (286 aa).

The protein belongs to the ATPase gamma chain family. As to quaternary structure, F-type ATPases have 2 components, CF(1) - the catalytic core - and CF(0) - the membrane proton channel. CF(1) has five subunits: alpha(3), beta(3), gamma(1), delta(1), epsilon(1). CF(0) has three main subunits: a, b and c.

Its subcellular location is the cell inner membrane. In terms of biological role, produces ATP from ADP in the presence of a proton gradient across the membrane. The gamma chain is believed to be important in regulating ATPase activity and the flow of protons through the CF(0) complex. In Marinomonas sp. (strain MWYL1), this protein is ATP synthase gamma chain.